The following is a 319-amino-acid chain: Structure-specific endonuclease subunit SLX1 (319 aa).

In terms of domain architecture, GIY-YIG spans 20–103; that stretch reads TFYCCYLLQS…QHGYKTHYIP (84 aa). The SLX1-type zinc finger occupies 233-297; that stretch reads CNLCGQCYDY…LPNFCMCPGC (65 aa).

It belongs to the SLX1 family. In terms of assembly, forms a heterodimer with SLX4. The cofactor is a divalent metal cation.

It is found in the nucleus. Catalytic subunit of the SLX1-SLX4 structure-specific endonuclease that resolves DNA secondary structures generated during DNA repair and recombination. Has endonuclease activity towards branched DNA substrates, introducing single-strand cuts in duplex DNA close to junctions with ss-DNA. This Vanderwaltozyma polyspora (strain ATCC 22028 / DSM 70294 / BCRC 21397 / CBS 2163 / NBRC 10782 / NRRL Y-8283 / UCD 57-17) (Kluyveromyces polysporus) protein is Structure-specific endonuclease subunit SLX1.